The following is a 574-amino-acid chain: Uric acid-xanthine permease (574 aa).

Positions 1 to 20 (MDNSIHSTDGPDSVIPNSNP) are disordered. The next 12 membrane-spanning stretches (helical) occupy residues 77–97 (LLAF…VVTP), 111–131 (LQQY…MVQI), 141–161 (YYIG…ISVA), 188–209 (AYGA…LAFV), 217–237 (IFPP…LIGT), 264–284 (LPWG…SIIL), 296–315 (CSVV…CGYF), 338–361 (VYGP…IGDV), 427–447 (CCLI…IVAI), 451–471 (VMGG…QAIV), 482–502 (FILT…TWFG), and 522–542 (LVLE…NAIM). The interval 555–574 (MPVSAHDNRDGEAEYQSKQA) is disordered. Lys-572 is covalently cross-linked (Glycyl lysine isopeptide (Lys-Gly) (interchain with G-Cter in ubiquitin)).

This sequence belongs to the nucleobase:cation symporter-2 (NCS2) (TC 2.A.40) family. Ubiquitinated by hulA. Ubiquitination leads to internalization, sorting into the endosomal pathway to the vacuolar lumen where uapA is eventually degraded.

It localises to the cell membrane. Uric acid-xanthine transporter. The protein is Uric acid-xanthine permease (uapA) of Emericella nidulans (strain FGSC A4 / ATCC 38163 / CBS 112.46 / NRRL 194 / M139) (Aspergillus nidulans).